The sequence spans 171 residues: 3-hydroxydecanoyl-[acyl-carrier-protein] dehydratase (171 aa).

Histidine 70 is a catalytic residue.

Belongs to the thioester dehydratase family. FabA subfamily. In terms of assembly, homodimer.

It localises to the cytoplasm. The catalysed reaction is a (3R)-hydroxyacyl-[ACP] = a (2E)-enoyl-[ACP] + H2O. The enzyme catalyses (3R)-hydroxydecanoyl-[ACP] = (2E)-decenoyl-[ACP] + H2O. It carries out the reaction (2E)-decenoyl-[ACP] = (3Z)-decenoyl-[ACP]. It functions in the pathway lipid metabolism; fatty acid biosynthesis. Functionally, necessary for the introduction of cis unsaturation into fatty acids. Catalyzes the dehydration of (3R)-3-hydroxydecanoyl-ACP to E-(2)-decenoyl-ACP and then its isomerization to Z-(3)-decenoyl-ACP. Can catalyze the dehydratase reaction for beta-hydroxyacyl-ACPs with saturated chain lengths up to 16:0, being most active on intermediate chain length. The polypeptide is 3-hydroxydecanoyl-[acyl-carrier-protein] dehydratase (Shewanella oneidensis (strain ATCC 700550 / JCM 31522 / CIP 106686 / LMG 19005 / NCIMB 14063 / MR-1)).